The following is a 129-amino-acid chain: Glycine cleavage system H protein (129 aa).

A Lipoyl-binding domain is found at 23-104; that stretch reads TVTVGITQHA…SYSAWLFKLK (82 aa). An N6-lipoyllysine modification is found at Lys-64.

It belongs to the GcvH family. In terms of assembly, the glycine cleavage system is composed of four proteins: P, T, L and H. (R)-lipoate is required as a cofactor.

The glycine cleavage system catalyzes the degradation of glycine. The H protein shuttles the methylamine group of glycine from the P protein to the T protein. The chain is Glycine cleavage system H protein from Nitrosomonas eutropha (strain DSM 101675 / C91 / Nm57).